The sequence spans 462 residues: Argininosuccinate lyase (462 aa).

Belongs to the lyase 1 family. Argininosuccinate lyase subfamily.

Its subcellular location is the cytoplasm. The catalysed reaction is 2-(N(omega)-L-arginino)succinate = fumarate + L-arginine. Its pathway is amino-acid biosynthesis; L-arginine biosynthesis; L-arginine from L-ornithine and carbamoyl phosphate: step 3/3. The polypeptide is Argininosuccinate lyase (Thermus thermophilus (strain ATCC BAA-163 / DSM 7039 / HB27)).